A 420-amino-acid chain; its full sequence is Mannose-1-phosphate guanylyltransferase regulatory subunit alpha (420 aa).

The interval 2–251 (LKAVILIGGP…DGIWSQIKSA (250 aa)) is substrate-binding domain. Residues glutamate 85 and glutamine 247 each coordinate GDP-alpha-D-mannose. Positions 273–420 (LAKHTPGGPR…SRSFTNQIIL (148 aa)) are hexapeptide repeat domain. Positions 356-384 (TPNDPNPNDPRAHMDSESLFKDGKLLPAI) are C-loop.

Belongs to the transferase hexapeptide repeat family. In terms of assembly, component of the GMPPA-GMPPB mannose-1-phosphate guanylyltransferase complex composed of 4 GMPPA subunits and 8 GMPPB subunits; the complex is organized into three layers, a central layer made up of 2 GMPPA dimers sandwiched between two layers each made up of 2 GMPPB dimers. In terms of tissue distribution, expressed in the liver (at protein level).

It is found in the cytoplasm. Regulatory subunit of the GMPPA-GMPPB mannose-1-phosphate guanylyltransferase complex; reduces the catalytic activity of GMPPB when part of the complex. Mediates allosteric feedback inhibition of GMPPB catalytic activity upon binding GDP-alpha-D-mannose. Together with GMPPB regulates GDP-alpha-D-mannose levels. In Sus scrofa (Pig), this protein is Mannose-1-phosphate guanylyltransferase regulatory subunit alpha (GMPPA).